The sequence spans 225 residues: Uracil-DNA glycosylase (225 aa).

The active-site Proton acceptor is aspartate 65.

Belongs to the uracil-DNA glycosylase (UDG) superfamily. UNG family.

It localises to the cytoplasm. It carries out the reaction Hydrolyzes single-stranded DNA or mismatched double-stranded DNA and polynucleotides, releasing free uracil.. In terms of biological role, excises uracil residues from the DNA which can arise as a result of misincorporation of dUMP residues by DNA polymerase or due to deamination of cytosine. This chain is Uracil-DNA glycosylase, found in Bacillus thuringiensis subsp. konkukian (strain 97-27).